Reading from the N-terminus, the 745-residue chain is Mediator of RNA polymerase II transcription subunit 25 (745 aa).

Positions 1–226 (MVPGSEGPAR…PRHMVLVRGL (226 aa)) are interaction with the Mediator complex. Residues 233–243 (SSTSGSLQTKQ) show a composition bias toward polar residues. Disordered stretches follow at residues 233 to 266 (SSTSGSLQTKQAVPLPPAPASAATLSAAPPQALP) and 299 to 374 (LGPR…VTPG). Over residues 252–262 (ASAATLSAAPP) the composition is skewed to low complexity. The segment covering 324–342 (PAPPLAPVPPGAPKPPPAS) has biased composition (pro residues). Residues 389-543 (LGGQQSVSNK…VNGIRQVITN (155 aa)) are interaction with VP16. Residues 395–545 (VSNKLLAWSG…GIRQVITNHK (151 aa)) form an interaction with CREBBP region. Interaction with RARA stretches follow at residues 563–652 (APPV…LLNP) and 639–705 (PGAN…WPTQ). A disordered region spans residues 584–738 (LRAPQPQPQG…PGLQPSVMED (155 aa)). Positions 596–617 (GASAATGQPQPQGATQAPTGAP) are enriched in low complexity. Residues 618 to 631 (QGPPGAAPGPPPSG) show a composition bias toward pro residues. The short motif at 645-649 (LRSLL) is the LXXLL motif element. Residues 652–663 (PAPPQTGVPPPQ) are compositionally biased toward pro residues. Arg723 carries the asymmetric dimethylarginine modification.

This sequence belongs to the Mediator complex subunit 25 family. Component of the Mediator complex, which is composed of MED1, MED4, MED6, MED7, MED8, MED9, MED10, MED11, MED12, MED13, MED13L, MED14, MED15, MED16, MED17, MED18, MED19, MED20, MED21, MED22, MED23, MED24, MED25, MED26, MED27, MED29, MED30, MED31, CCNC, CDK8 and CDC2L6/CDK11. The MED12, MED13, CCNC and CDK8 subunits form a distinct module termed the CDK8 module. Mediator containing the CDK8 module is less active than Mediator lacking this module in supporting transcriptional activation. Individual preparations of the Mediator complex lacking one or more distinct subunits have been variously termed ARC, CRSP, DRIP, PC2, SMCC and TRAP. Interacts with CREBBP. Interacts with ESR1, GR and THRB in a ligand-dependent fashion. Binds the Herpes simplex virus activator VP16. Interacts with RARA and RXRA in a ligand-dependent fashion.

Its subcellular location is the nucleus. In terms of biological role, component of the Mediator complex, a coactivator involved in the regulated transcription of nearly all RNA polymerase II-dependent genes. Mediator functions as a bridge to convey information from gene-specific regulatory proteins to the basal RNA polymerase II transcription machinery. Mediator is recruited to promoters by direct interactions with regulatory proteins and serves as a scaffold for the assembly of a functional preinitiation complex with RNA polymerase II and the general transcription factors. Required for RARA/RXRA-mediated transcription. This Mus musculus (Mouse) protein is Mediator of RNA polymerase II transcription subunit 25 (Med25).